We begin with the raw amino-acid sequence, 322 residues long: Cytochrome c biogenesis protein CcsA (322 aa).

8 consecutive transmembrane segments (helical) span residues 9–29 (ILTHISFSIVSIVITLHLITL), 44–64 (GMIATFLCLTGLLITRWIYSG), 71–91 (LYESFIFLSWSFSLIHIVPYF), 98–118 (LTTITASSTIFTQGFATSGLL), 143–163 (MILSYAALLCGSLLSVALLVI), 226–246 (VISLGFIFLTIGILSGAVWAN), 253–273 (WSWDPKETWAFITWIVFAIYL), and 287–307 (AIVATLGFLIIWICYFGVNLL).

Belongs to the CcmF/CycK/Ccl1/NrfE/CcsA family. As to quaternary structure, may interact with Ccs1.

It is found in the plastid. The protein resides in the chloroplast thylakoid membrane. Its function is as follows. Required during biogenesis of c-type cytochromes (cytochrome c6 and cytochrome f) at the step of heme attachment. The protein is Cytochrome c biogenesis protein CcsA of Guizotia abyssinica (Niger).